A 131-amino-acid chain; its full sequence is Large ribosomal subunit protein bL21 (131 aa).

Residues 111 to 131 (VAAATGTADARRAAHNASAKE) form a disordered region.

This sequence belongs to the bacterial ribosomal protein bL21 family. As to quaternary structure, part of the 50S ribosomal subunit. Contacts protein L20.

Its function is as follows. This protein binds to 23S rRNA in the presence of protein L20. This is Large ribosomal subunit protein bL21 from Cereibacter sphaeroides (strain ATCC 17029 / ATH 2.4.9) (Rhodobacter sphaeroides).